A 432-amino-acid polypeptide reads, in one-letter code: Glutamate-1-semialdehyde 2,1-aminomutase (432 aa).

N6-(pyridoxal phosphate)lysine is present on Lys-265.

This sequence belongs to the class-III pyridoxal-phosphate-dependent aminotransferase family. HemL subfamily. Homodimer. Pyridoxal 5'-phosphate is required as a cofactor.

Its subcellular location is the cytoplasm. It catalyses the reaction (S)-4-amino-5-oxopentanoate = 5-aminolevulinate. The protein operates within porphyrin-containing compound metabolism; protoporphyrin-IX biosynthesis; 5-aminolevulinate from L-glutamyl-tRNA(Glu): step 2/2. This is Glutamate-1-semialdehyde 2,1-aminomutase from Histophilus somni (strain 129Pt) (Haemophilus somnus).